We begin with the raw amino-acid sequence, 282 residues long: Parvulin-like PPIase (282 aa).

Positions 1 to 20 (MKKLSVIFLSVSMLSSIAFG) are cleaved as a signal peptide. The region spanning 138–231 (KEQIKVAHIL…FGWHIIKVLE (94 aa)) is the PpiC domain.

This sequence belongs to the PpiC/parvulin rotamase family.

The protein localises to the cell outer membrane. The catalysed reaction is [protein]-peptidylproline (omega=180) = [protein]-peptidylproline (omega=0). The protein is Parvulin-like PPIase (plp) of Rickettsia prowazekii (strain Madrid E).